The primary structure comprises 284 residues: Pantothenate synthetase (284 aa).

30–37 (MGNLHDGH) is a binding site for ATP. The Proton donor role is filled by His37. (R)-pantoate is bound at residue Gln61. Gln61 serves as a coordination point for beta-alanine. Residue 149-152 (GEKD) coordinates ATP. Gln155 contacts (R)-pantoate. Residues Ile178 and 186–189 (LSSR) contribute to the ATP site.

Belongs to the pantothenate synthetase family. Homodimer.

Its subcellular location is the cytoplasm. It catalyses the reaction (R)-pantoate + beta-alanine + ATP = (R)-pantothenate + AMP + diphosphate + H(+). The protein operates within cofactor biosynthesis; (R)-pantothenate biosynthesis; (R)-pantothenate from (R)-pantoate and beta-alanine: step 1/1. Catalyzes the condensation of pantoate with beta-alanine in an ATP-dependent reaction via a pantoyl-adenylate intermediate. The chain is Pantothenate synthetase from Salmonella heidelberg (strain SL476).